The chain runs to 242 residues: ATP synthase subunit a (242 aa).

A run of 5 helical transmembrane segments spans residues 21-41 (LSSIMMLIITAVIVFVIAIIC), 79-99 (FHFLAVTLIFFIFVSNMLGLP), 116-136 (DATVTLTLSTLIILLTHFYGV), 173-193 (LYGNIFAGELLLGLLAGLVTG), and 198-218 (AWGWIIGLPGLVVWQGFSIFI).

The protein belongs to the ATPase A chain family. F-type ATPases have 2 components, CF(1) - the catalytic core - and CF(0) - the membrane proton channel. CF(1) has five subunits: alpha(3), beta(3), gamma(1), delta(1), epsilon(1). CF(0) has three main subunits: a(1), b(2) and c(9-12). The alpha and beta chains form an alternating ring which encloses part of the gamma chain. CF(1) is attached to CF(0) by a central stalk formed by the gamma and epsilon chains, while a peripheral stalk is formed by the delta and b chains.

The protein resides in the cell membrane. Functionally, key component of the proton channel; it plays a direct role in the translocation of protons across the membrane. The protein is ATP synthase subunit a of Staphylococcus saprophyticus subsp. saprophyticus (strain ATCC 15305 / DSM 20229 / NCIMB 8711 / NCTC 7292 / S-41).